Here is a 117-residue protein sequence, read N- to C-terminus: Large ribosomal subunit protein uL22 (117 aa).

This sequence belongs to the universal ribosomal protein uL22 family. As to quaternary structure, part of the 50S ribosomal subunit.

In terms of biological role, this protein binds specifically to 23S rRNA; its binding is stimulated by other ribosomal proteins, e.g. L4, L17, and L20. It is important during the early stages of 50S assembly. It makes multiple contacts with different domains of the 23S rRNA in the assembled 50S subunit and ribosome. The globular domain of the protein is located near the polypeptide exit tunnel on the outside of the subunit, while an extended beta-hairpin is found that lines the wall of the exit tunnel in the center of the 70S ribosome. The chain is Large ribosomal subunit protein uL22 from Latilactobacillus sakei subsp. sakei (strain 23K) (Lactobacillus sakei subsp. sakei).